We begin with the raw amino-acid sequence, 872 residues long: Alanine--tRNA ligase (872 aa).

Residues histidine 567, histidine 571, cysteine 669, and histidine 673 each contribute to the Zn(2+) site.

It belongs to the class-II aminoacyl-tRNA synthetase family. It depends on Zn(2+) as a cofactor.

It localises to the cytoplasm. The catalysed reaction is tRNA(Ala) + L-alanine + ATP = L-alanyl-tRNA(Ala) + AMP + diphosphate. In terms of biological role, catalyzes the attachment of alanine to tRNA(Ala) in a two-step reaction: alanine is first activated by ATP to form Ala-AMP and then transferred to the acceptor end of tRNA(Ala). Also edits incorrectly charged Ser-tRNA(Ala) and Gly-tRNA(Ala) via its editing domain. This is Alanine--tRNA ligase from Streptococcus pyogenes serotype M28 (strain MGAS6180).